A 511-amino-acid chain; its full sequence is Acidic amino acid decarboxylase GADL1 (511 aa).

Lysine 323 carries the N6-(pyridoxal phosphate)lysine modification.

The protein belongs to the group II decarboxylase family. Homodimer. Requires pyridoxal 5'-phosphate as cofactor.

It catalyses the reaction L-aspartate + H(+) = beta-alanine + CO2. The enzyme catalyses 3-sulfino-L-alanine + H(+) = hypotaurine + CO2. Its function is as follows. Catalyzes the decarboxylation of L-aspartate, 3-sulfino-L-alanine (cysteine sulfinic acid), and L-cysteate to beta-alanine, hypotaurine and taurine, respectively. The preferred substrate is L-aspartate. Does not exhibit any decarboxylation activity toward glutamate. The polypeptide is Acidic amino acid decarboxylase GADL1 (gadl1) (Xenopus tropicalis (Western clawed frog)).